Here is a 313-residue protein sequence, read N- to C-terminus: Aspartate carbamoyltransferase catalytic subunit (313 aa).

Arg-53 and Thr-54 together coordinate carbamoyl phosphate. Lys-82 contributes to the L-aspartate binding site. Carbamoyl phosphate-binding residues include Arg-103, His-131, and Gln-134. Residues Arg-163 and Arg-224 each contribute to the L-aspartate site. Positions 263 and 264 each coordinate carbamoyl phosphate.

This sequence belongs to the aspartate/ornithine carbamoyltransferase superfamily. ATCase family. As to quaternary structure, heterooligomer of catalytic and regulatory chains.

It catalyses the reaction carbamoyl phosphate + L-aspartate = N-carbamoyl-L-aspartate + phosphate + H(+). Its pathway is pyrimidine metabolism; UMP biosynthesis via de novo pathway; (S)-dihydroorotate from bicarbonate: step 2/3. Catalyzes the condensation of carbamoyl phosphate and aspartate to form carbamoyl aspartate and inorganic phosphate, the committed step in the de novo pyrimidine nucleotide biosynthesis pathway. This Halorubrum lacusprofundi (strain ATCC 49239 / DSM 5036 / JCM 8891 / ACAM 34) protein is Aspartate carbamoyltransferase catalytic subunit.